We begin with the raw amino-acid sequence, 186 residues long: Elongation factor P (186 aa).

This sequence belongs to the elongation factor P family.

Its subcellular location is the cytoplasm. Its pathway is protein biosynthesis; polypeptide chain elongation. Functionally, involved in peptide bond synthesis. Stimulates efficient translation and peptide-bond synthesis on native or reconstituted 70S ribosomes in vitro. Probably functions indirectly by altering the affinity of the ribosome for aminoacyl-tRNA, thus increasing their reactivity as acceptors for peptidyl transferase. In Shewanella loihica (strain ATCC BAA-1088 / PV-4), this protein is Elongation factor P.